We begin with the raw amino-acid sequence, 241 residues long: MSDWSLSQLFASLHEDIQLRLGTARKAFQHPGAKGDASEGVWIEMLDTYLPKRYQAANAFVVDSLGNFSDQIDVVVFDRQYSPFIFKFNEQIIVPAESVYAVFEAKQSASADLVAYAQRKVASVRRLHRTSLPIPHAGGTYPAKPLIPILGGLLTFESDWSPALGMSFDKALNGDLSDGRLDMGCVASHGHFYFNNIDSKFNFEHGNKPATAFLFRLIAQLQFSGTVPMIDIDAYGKWLAN.

Catalysis depends on residues D73, E104, and K106. Mg(2+)-binding residues include D73 and E104.

This sequence belongs to the NucC endonuclease family. Self-oligomerizes. Forms homotrimers; in the presence of cAAA the trimers associate face-to-face to form homohexamers. The 2 cAAA-binding sites are on the exterior of the hexamer at the three-way junction, there are maximally 2 cyclic nucleotides per hexamer. Mg(2+) serves as cofactor.

Activated by cAAA and to a lesser extent cAA and cAAG; cAAA and cAA are products of its cognate CD-NTase. Cyclic nucleotide binding causes hexamerization. Cyclic nucleotide binding causes a series of shifts that enclose the cAAA molecule, enable hexamer formation and juxtapose pairs of active sites to allow dsDNA cleavage. Its function is as follows. Effector DNase of a CBASS antivirus system. CBASS (cyclic oligonucleotide-based antiphage signaling system) provides immunity against bacteriophage. The CD-NTase protein synthesizes cyclic nucleotides in response to infection; these serve as specific second messenger signals. The signals activate a diverse range of effectors, leading to bacterial cell death and thus abortive phage infection. A type III-C(AAA) CBASS system. Functionally, a cyclic nucleotide-activated dsDNase. In the presence of 3',3',3'-cyclic AMP-AMP-AMP (cAAA), and to a lesser extent 3',3',3'-cyclic AMP-AMP-GMP (cAAG) and cyclic-di-AMP (c-di-AMP), endonucleolytically degrades dsDNA. Binds one cAAA in a pocket on one surface of the trimer; cAAA binding promotes hexamerization, which is necessary for nuclease activation. Also binds c-diAMP or linear di-AMP with lower affinity. The nuclease digests dsDNA to about 50 bp lengths with a 2-base 3' overhang and a consensus recognition site of 5'-Axx|T-3'. DNA has been modeled to contact a pair of juxtaposed active sites (one from each layer of the hexamer), accounting for cleavage on both strands and the 2-base overhang. In terms of biological role, protects E.coli strain JP313 against bacteriophage lambda cI- infection. When the cdnC-cap7-cap6-nucC operon is transformed into a susceptible strain it confers bacteriophage immunity. Mutations in the sensor (Cap7 also called HORMA) or effector proteins (CdnC, NucC) but not the disassembly protein (Cap6 also called Trip13) no longer confer immunity. The presence of the intact operon leads to culture collapse and cell death which occurs before the phage has finished its replication cycle, thus protecting non-infected bacteria by aborting the phage infection and preventing its propagation. This is Endodeoxyribonuclease NucC from Escherichia coli (strain MS 115-1).